The following is a 1196-amino-acid chain: Nucleolar protein 6 (1196 aa).

Disordered regions lie at residues 1-75 (MPGK…VKPP) and 1140-1196 (KREQ…KALK). Positions 22 to 31 (HAEDHSDLEH) are enriched in basic and acidic residues. Basic residues predominate over residues 1165–1174 (KPKKHRKRKG).

This sequence belongs to the NRAP family. Part of the small subunit (SSU) processome, composed of more than 70 proteins and the RNA chaperone small nucleolar RNA (snoRNA) U3.

It localises to the nucleus. The protein resides in the nucleolus. It is found in the chromosome. Functionally, part of the small subunit (SSU) processome, first precursor of the small eukaryotic ribosomal subunit. During the assembly of the SSU processome in the nucleolus, many ribosome biogenesis factors, an RNA chaperone and ribosomal proteins associate with the nascent pre-rRNA and work in concert to generate RNA folding, modifications, rearrangements and cleavage as well as targeted degradation of pre-ribosomal RNA by the RNA exosome. The sequence is that of Nucleolar protein 6 from Drosophila sechellia (Fruit fly).